The chain runs to 284 residues: tRNA-cytidine(32) 2-sulfurtransferase (284 aa).

A compositionally biased stretch (polar residues) spans 1–11 (MTFHQPVSETA). The disordered stretch occupies residues 1 to 20 (MTFHQPVSETAQPDEASGHP). The short motif at 63-68 (SGGKDS) is the PP-loop motif element. The [4Fe-4S] cluster site is built by C138, C141, and C229.

This sequence belongs to the TtcA family. Homodimer. The cofactor is Mg(2+). It depends on [4Fe-4S] cluster as a cofactor.

Its subcellular location is the cytoplasm. It carries out the reaction cytidine(32) in tRNA + S-sulfanyl-L-cysteinyl-[cysteine desulfurase] + AH2 + ATP = 2-thiocytidine(32) in tRNA + L-cysteinyl-[cysteine desulfurase] + A + AMP + diphosphate + H(+). Its pathway is tRNA modification. In terms of biological role, catalyzes the ATP-dependent 2-thiolation of cytidine in position 32 of tRNA, to form 2-thiocytidine (s(2)C32). The sulfur atoms are provided by the cysteine/cysteine desulfurase (IscS) system. The polypeptide is tRNA-cytidine(32) 2-sulfurtransferase (Chelativorans sp. (strain BNC1)).